The sequence spans 345 residues: MADRIYWTLEQAQDLFNKPFLELMFEAQQIHRQHFDPRQVQVSTLLSIKTGSCPEDCKYCPQSSRYRTGIDTERLMQVEQVLDSARQAKAAGSTRFCMGAAWKNPHERDMPYLEQMVQGVKAMGMETCMTLGMLHHDQAERLASAGLDFYNHNLDTSPEFYGSIITTRTYQERLDTLDKVRGAGIKVCSGGIVGLGETVRDRAGLLVQLANLPTPPESVPINMLVKVKGTPLADNEDVDPFDFIRTIAVARIMMPASYVRLSAGREQMSEQTQAMCFMAGANSIFYGCKLLTTPNPKEDKDLALFLKLGLNPQQTGTEFGDNQQQQRLAEQLINADSEQFYNAAV.

The Radical SAM core domain occupies Arg38–Ala256. Residues Cys53, Cys57, and Cys60 each contribute to the [4Fe-4S] cluster site. [2Fe-2S] cluster-binding residues include Cys97, Cys128, Cys188, and Arg260.

The protein belongs to the radical SAM superfamily. Biotin synthase family. Homodimer. It depends on [4Fe-4S] cluster as a cofactor. [2Fe-2S] cluster is required as a cofactor.

It catalyses the reaction (4R,5S)-dethiobiotin + (sulfur carrier)-SH + 2 reduced [2Fe-2S]-[ferredoxin] + 2 S-adenosyl-L-methionine = (sulfur carrier)-H + biotin + 2 5'-deoxyadenosine + 2 L-methionine + 2 oxidized [2Fe-2S]-[ferredoxin]. Its pathway is cofactor biosynthesis; biotin biosynthesis; biotin from 7,8-diaminononanoate: step 2/2. Functionally, catalyzes the conversion of dethiobiotin (DTB) to biotin by the insertion of a sulfur atom into dethiobiotin via a radical-based mechanism. The protein is Biotin synthase of Pectobacterium atrosepticum (strain SCRI 1043 / ATCC BAA-672) (Erwinia carotovora subsp. atroseptica).